The chain runs to 61 residues: MAKQKGNRIQVILECTEHRKSGMPGISRYSTEKNRKNTSDRLVLKKYNPILKKYTLHKEIK.

This sequence belongs to the bacterial ribosomal protein bL33 family.

The chain is Large ribosomal subunit protein bL33 from Amoebophilus asiaticus (strain 5a2).